We begin with the raw amino-acid sequence, 160 residues long: MNIIGIDPSLNSTGWAILSVHDNNYNEIRLVDNGSILTSNKKTIGERLNKIYSELLNILNSYKVDTASMEEIFINKNPKSSTLLCYARGVLLLTLNVACIPLFEYSANRVKKSITGNGHAKKEQVCFMIENILNIKCHGTYDISDAIAVAICHIYSIKAF.

Catalysis depends on residues Asp-7, Glu-70, and Asp-142. Mg(2+) is bound by residues Asp-7, Glu-70, and Asp-142.

The protein belongs to the RuvC family. As to quaternary structure, homodimer which binds Holliday junction (HJ) DNA. The HJ becomes 2-fold symmetrical on binding to RuvC with unstacked arms; it has a different conformation from HJ DNA in complex with RuvA. In the full resolvosome a probable DNA-RuvA(4)-RuvB(12)-RuvC(2) complex forms which resolves the HJ. It depends on Mg(2+) as a cofactor.

The protein localises to the cytoplasm. The enzyme catalyses Endonucleolytic cleavage at a junction such as a reciprocal single-stranded crossover between two homologous DNA duplexes (Holliday junction).. In terms of biological role, the RuvA-RuvB-RuvC complex processes Holliday junction (HJ) DNA during genetic recombination and DNA repair. Endonuclease that resolves HJ intermediates. Cleaves cruciform DNA by making single-stranded nicks across the HJ at symmetrical positions within the homologous arms, yielding a 5'-phosphate and a 3'-hydroxyl group; requires a central core of homology in the junction. The consensus cleavage sequence is 5'-(A/T)TT(C/G)-3'. Cleavage occurs on the 3'-side of the TT dinucleotide at the point of strand exchange. HJ branch migration catalyzed by RuvA-RuvB allows RuvC to scan DNA until it finds its consensus sequence, where it cleaves and resolves the cruciform DNA. In Ehrlichia ruminantium (strain Welgevonden), this protein is Crossover junction endodeoxyribonuclease RuvC.